The following is a 666-amino-acid chain: DNA mismatch repair protein MutL (666 aa).

Belongs to the DNA mismatch repair MutL/HexB family.

Functionally, this protein is involved in the repair of mismatches in DNA. It is required for dam-dependent methyl-directed DNA mismatch repair. May act as a 'molecular matchmaker', a protein that promotes the formation of a stable complex between two or more DNA-binding proteins in an ATP-dependent manner without itself being part of a final effector complex. The sequence is that of DNA mismatch repair protein MutL from Clostridium botulinum (strain 657 / Type Ba4).